A 351-amino-acid polypeptide reads, in one-letter code: Photosystem II D2 protein (351 aa).

The helical transmembrane segment at 39–59 (TAYLAIGGWLTGTTFVTSWYT) threads the bilayer. His-116 contacts chlorophyll a. A helical transmembrane segment spans residues 123-139 (GFMLRQFEISRLVGIRP). Pheophytin a contacts are provided by Gln-128 and Asn-141. The chain crosses the membrane as a helical span at residues 151–164 (VFVSVFLIYPLGQS). Residue His-196 participates in chlorophyll a binding. A helical membrane pass occupies residues 206–226 (GALLSAIHGVTVENTLYEDGE). 2 residues coordinate a plastoquinone: His-213 and Phe-260. His-213 is a binding site for Fe cation. Residue His-267 coordinates Fe cation. Residues 277-293 (GLWTSSIGIIGLALNLR) traverse the membrane as a helical segment.

It belongs to the reaction center PufL/M/PsbA/D family. PSII is composed of 1 copy each of membrane proteins PsbA, PsbB, PsbC, PsbD, PsbE, PsbF, PsbH, PsbI, PsbJ, PsbK, PsbL, PsbM, PsbT, PsbX, PsbY, PsbZ, Psb30/Ycf12, peripheral proteins PsbO, CyanoQ (PsbQ), PsbU, PsbV and a large number of cofactors. It forms dimeric complexes. It depends on The D1/D2 heterodimer binds P680, chlorophylls that are the primary electron donor of PSII, and subsequent electron acceptors. It shares a non-heme iron and each subunit binds pheophytin, quinone, additional chlorophylls, carotenoids and lipids. There is also a Cl(-1) ion associated with D1 and D2, which is required for oxygen evolution. The PSII complex binds additional chlorophylls, carotenoids and specific lipids. as a cofactor.

It is found in the host cellular thylakoid membrane. The catalysed reaction is 2 a plastoquinone + 4 hnu + 2 H2O = 2 a plastoquinol + O2. Functionally, photosystem II (PSII) is a light-driven water:plastoquinone oxidoreductase that uses light energy to abstract electrons from H(2)O, generating O(2) and a proton gradient subsequently used for ATP formation. It consists of a core antenna complex that captures photons, and an electron transfer chain that converts photonic excitation into a charge separation. The D1/D2 (PsbA/PsbD) reaction center heterodimer binds P680, the primary electron donor of PSII as well as several subsequent electron acceptors. D2 is needed for assembly of a stable PSII complex. This is Photosystem II D2 protein (psbD) from Synechococcus.